Here is a 309-residue protein sequence, read N- to C-terminus: Homoserine O-succinyltransferase (309 aa).

The Acyl-thioester intermediate role is filled by Cys142. Substrate is bound by residues Lys163 and Ser192. His235 acts as the Proton acceptor in catalysis. Residue Glu237 is part of the active site. Substrate is bound at residue Arg249.

This sequence belongs to the MetA family. As to quaternary structure, homodimer.

It is found in the cytoplasm. The enzyme catalyses L-homoserine + succinyl-CoA = O-succinyl-L-homoserine + CoA. It functions in the pathway amino-acid biosynthesis; L-methionine biosynthesis via de novo pathway; O-succinyl-L-homoserine from L-homoserine: step 1/1. Its function is as follows. Transfers a succinyl group from succinyl-CoA to L-homoserine, forming succinyl-L-homoserine. This Escherichia coli (strain K12 / MC4100 / BW2952) protein is Homoserine O-succinyltransferase.